Here is a 174-residue protein sequence, read N- to C-terminus: ATP-dependent protease subunit HslV (174 aa).

Thr2 is an active-site residue. Na(+) is bound by residues Gly157, Cys160, and Thr163.

Belongs to the peptidase T1B family. HslV subfamily. A double ring-shaped homohexamer of HslV is capped on each side by a ring-shaped HslU homohexamer. The assembly of the HslU/HslV complex is dependent on binding of ATP.

It is found in the cytoplasm. It catalyses the reaction ATP-dependent cleavage of peptide bonds with broad specificity.. Its activity is regulated as follows. Allosterically activated by HslU binding. In terms of biological role, protease subunit of a proteasome-like degradation complex believed to be a general protein degrading machinery. In Shewanella pealeana (strain ATCC 700345 / ANG-SQ1), this protein is ATP-dependent protease subunit HslV.